Reading from the N-terminus, the 713-residue chain is Serologically defined colon cancer antigen 8 (713 aa).

Phosphoserine is present on residues Ser-4 and Ser-28. The interval 84-103 (QADKESEVSPSRRRKMSPLR) is disordered. Residues 129 to 175 (IHHLEAEVKFCKEELSGMKNKIQVVVLENEGLQQQLKSQRQEETLRE) adopt a coiled-coil conformation. Residues 194–215 (EDSGVGETSKRPFSHDNADFGK) form a disordered region. A compositionally biased stretch (basic and acidic residues) spans 201–212 (TSKRPFSHDNAD). Positions 216–713 (AASAGEQLEL…QLPSMPQSDC (498 aa)) are sufficient for homodimerization. Coiled-coil stretches lie at residues 223-273 (LELE…LLAA) and 348-707 (EEAN…QLPS). A mediates interaction with OFD1 region spans residues 533 to 713 (HQLHLTRQEK…QLPSMPQSDC (181 aa)).

Homodimer. Interacts with OFD1; the interaction is direct. Interacts with FAM161A. Interacts with RABEP2, ERC1 and CEP131. In terms of tissue distribution, expressed in thymus, prostate, testis, ovary, small intestine, colon, mucosa, colon and renal cancer tumors.

The protein localises to the cytoplasm. It localises to the cytoskeleton. Its subcellular location is the microtubule organizing center. It is found in the centrosome. The protein resides in the centriole. The protein localises to the cilium basal body. It localises to the cell junction. Its function is as follows. Plays a role in the establishment of cell polarity and epithelial lumen formation. Also plays an essential role in ciliogenesis and subsequent Hedgehog signaling pathway that requires the presence of intact primary cilia for pathway activation. Mechanistically, interacts with and mediates RABEP2 centrosomal localization which is critical for ciliogenesis. In Homo sapiens (Human), this protein is Serologically defined colon cancer antigen 8 (SDCCAG8).